Consider the following 302-residue polypeptide: CRISPR-associated endonuclease Cas1 1 (302 aa).

Mn(2+) contacts are provided by Glu-159, His-219, and Glu-234.

It belongs to the CRISPR-associated endonuclease Cas1 family. Homodimer, forms a heterotetramer with a Cas2 homodimer. The cofactor is Mg(2+). It depends on Mn(2+) as a cofactor.

In terms of biological role, CRISPR (clustered regularly interspaced short palindromic repeat), is an adaptive immune system that provides protection against mobile genetic elements (viruses, transposable elements and conjugative plasmids). CRISPR clusters contain spacers, sequences complementary to antecedent mobile elements, and target invading nucleic acids. CRISPR clusters are transcribed and processed into CRISPR RNA (crRNA). Acts as a dsDNA endonuclease. Involved in the integration of spacer DNA into the CRISPR cassette. This is CRISPR-associated endonuclease Cas1 1 from Pyrobaculum aerophilum (strain ATCC 51768 / DSM 7523 / JCM 9630 / CIP 104966 / NBRC 100827 / IM2).